The primary structure comprises 69 residues: Large ribosomal subunit protein uL29 (69 aa).

The protein belongs to the universal ribosomal protein uL29 family.

The sequence is that of Large ribosomal subunit protein uL29 from Lachnoclostridium phytofermentans (strain ATCC 700394 / DSM 18823 / ISDg) (Clostridium phytofermentans).